A 261-amino-acid polypeptide reads, in one-letter code: tRNA pseudouridine synthase A (261 aa).

Catalysis depends on Asp-51, which acts as the Nucleophile. Tyr-109 contacts substrate.

It belongs to the tRNA pseudouridine synthase TruA family. Homodimer.

The enzyme catalyses uridine(38/39/40) in tRNA = pseudouridine(38/39/40) in tRNA. In terms of biological role, formation of pseudouridine at positions 38, 39 and 40 in the anticodon stem and loop of transfer RNAs. The protein is tRNA pseudouridine synthase A of Shewanella amazonensis (strain ATCC BAA-1098 / SB2B).